Reading from the N-terminus, the 1370-residue chain is MREKGRRKKGRTWAEAAKTVLEKYPNTPMSHKEILQVIQREGLKEIRSGTSPLACLNAMLHTNSRGEEGIFYKVPGRMGVYTLKKDVPDGVKELSECSEESSDGQSDSHSSDNSSSSDGGSNKEGRKSRWKRKVSSRLSHPPSPPSGCPSPTIPASKVISPSQKHSKKALKQALKQQQQKKKQQQCRPSMSISNQHLSLKTVKAASDSVPAKPGQMKRTKCADIDVETPDSILVNTNLRALINKHTFSVLPGDCQQRLLLLLPEVDRQVGPDGLMKLNGSALNNEFFTSAAQGWKERLSEGEFTPEMQVRIRQEIEKEKKVELWKEQFFENYYGQSSGLSLEDSQKLTASSSDPKAKKTPAEQPKSILPSEASPVRIVPVVPQSECKEEAVQIPSPSQKEENQDEARPDSKSPEPVLASASNTNELITMKPIKSPKDEGLLEQKPVACAEQESEKENHVTTTSRNNKSENQEALAISPSKSKNAGLQKPIIKPVAEASPLNPDMKMPPATVTDQIQESLKRKSSLTDEEATSSWEKRPRITENRQHQQPFQVSPQPFLNRGDRVQVRKVPPLKIPVSRISPMLFSTSQVSPRARFPISITSPYRTGARTLADIKAKAQLVEAQKAAAAAAAAAAAAASVGGTIPGPGPGGGQSPREGGERKIAGGGSAGSDPVSTNGKGPTLELAGTGSRGGTRELLPCGPQPETNMPGQAQPPGISGAQLQQTSSVPTGLASSGACTSVPLPAHIEISNSEKPNLHKATATAASPCHLQDPRSCRLEKALSPTGPPLISGASTVYFVADGTVEPKAGSNKNAPKPSALAKTTAPAPLDMTSSPVTTASLEKLPVPQISGTATSTGSAPSSSTLPAASSLKTPGTSANMNGPISRTSSSIPANNPLVTQLLQGKDVPLEQILPKPLTKIEMKTVPLTTKEEKGIGIFPGISVMESSSREEVNGRQAHLAIPQLGKPLQSKQLSQVPRPVFTAKDRKDPCIDTHQYREGLSKTTQDQLFQTLIQRAQRQSVLSFVPPSQFNFAHSGFHLEDISTSQKFMLGFAGRRTSKPAMAGHYLLNISTYGRGTENIKRTHSVNPDDRFCLSSPTEALRMGHADYKNTTGEISSKEDESDEDRVGDEQEPISVKEEPWASQSSGRHPHHGEASSTNDCLASKNGKTEAPVSEQTTLGQENYIFSRGQASDEKSLPRDFIPAAHKQMTHAVRGKTVCSSPELFNSTALSLPADSPTHQPLLLPPLQTPKLYGSPTQIGPSYRGMINVSTSSDMDHNSAIPGSQVSSNVGDVMSFSVTVTTIPASQAMNPSSHGQTIPVQTFPDDNSIEDTPSKCYCRLKAMIMCKGCGAFCHDDCIGPSKLCVSCLVVR.

The region spanning arginine 11–aspartate 86 is the HTH HARE-type domain. Positions lysine 92–methionine 216 are disordered. The span at aspartate 103–glycine 120 shows a compositional bias: low complexity. Positions proline 141–threonine 152 are enriched in pro residues. Serine 150 is subject to Phosphoserine. A Nuclear localization signal motif is present at residues glutamine 178–lysine 182. The segment covering cysteine 186–serine 198 has biased composition (polar residues). The 110-residue stretch at proline 229–glycine 338 folds into the DEUBAD domain. The short motif at leucine 258 to leucine 262 is the LXXLL motif element. Disordered stretches follow at residues serine 340–glutamine 487 and glutamine 516–glutamate 535. The segment covering glutamine 398–serine 412 has biased composition (basic and acidic residues). A phosphoserine mark is found at serine 477, serine 524, serine 553, and serine 590. Position 594 is an asymmetric dimethylarginine (arginine 594). A Phosphoserine modification is found at serine 601. Residues isoleucine 643–glutamine 652 are compositionally biased toward gly residues. Disordered regions lie at residues isoleucine 643–serine 734, proline 805–proline 891, and glycine 1103–glutamine 1175. Composition is skewed to polar residues over residues alanine 719–serine 734 and methionine 830–serine 839. Over residues serine 849 to leucine 870 the composition is skewed to low complexity. The span at lysine 871–proline 891 shows a compositional bias: polar residues. Positions aspartate 1119–glutamate 1131 are enriched in acidic residues. Phosphoserine is present on residues serine 1121 and serine 1254. The segment at proline 1332–valine 1369 adopts a PHD-type; atypical zinc-finger fold.

The protein belongs to the Asx family. In terms of assembly, core component of the polycomb repressive deubiquitinase (PR-DUB) complex, at least composed of BAP1, one of ASXL1, ASXL2 or (probably) ASXL3, and one of MBD5 or MBD6. Distinct combinations of ASXL and MBD proteins may preferentially bind specific histone modification marks. The PR-DUB core associates with a number of accessory proteins, including FOXK1, FOXK2, KDM1B, HCFC1 and OGT; KDM1B specifically associates with ASXL2 PR-DUB complexes. Interacts (via PHD domain) with MBD5 and MBD6 (via MBD domain); the interaction is probably direct and mediates association of MBD proteins with the PR-DUB core. Interacts with PPARA and PPARG.

The protein localises to the nucleus. In terms of biological role, putative Polycomb group (PcG) protein. PcG proteins act by forming multiprotein complexes, which are required to maintain the transcriptionally repressive state of homeotic genes throughout development. PcG proteins are not required to initiate repression, but to maintain it during later stages of development. They probably act via methylation of histones, rendering chromatin heritably changed in its expressibility. Involved in transcriptional regulation mediated by ligand-bound nuclear hormone receptors, such as peroxisome proliferator-activated receptor gamma (PPARG). Acts as a coactivator for PPARG and enhances its adipocyte differentiation-inducing activity; the function seems to involve differential recruitment of acetylated and methylated histone H3. Non-catalytic component of the PR-DUB complex, a complex that specifically mediates deubiquitination of histone H2A monoubiquitinated at 'Lys-119' (H2AK119ub1). The PR-DUB complex is an epigenetic regulator of gene expression and acts as a transcriptional coactivator, affecting genes involved in development, cell communication, signaling, cell proliferation and cell viability. ASXL1, ASXL2 and ASXL3 function redundantly in the PR-DUB complex. The ASXL proteins are essential for chromatin recruitment and transcriptional activation of associated genes. ASXL1 and ASXL2 are important for BAP1 protein stability. This Mus musculus (Mouse) protein is Putative Polycomb group protein ASXL2 (Asxl2).